We begin with the raw amino-acid sequence, 172 residues long: Protein-export protein SecB (172 aa).

Belongs to the SecB family. Homotetramer, a dimer of dimers. One homotetramer interacts with 1 SecA dimer.

Its subcellular location is the cytoplasm. One of the proteins required for the normal export of preproteins out of the cell cytoplasm. It is a molecular chaperone that binds to a subset of precursor proteins, maintaining them in a translocation-competent state. It also specifically binds to its receptor SecA. The sequence is that of Protein-export protein SecB from Cupriavidus pinatubonensis (strain JMP 134 / LMG 1197) (Cupriavidus necator (strain JMP 134)).